The primary structure comprises 490 residues: Histone-lysine N-methyltransferase Smyd1 (490 aa).

Residues 7–253 form the SET domain; it reads ENVEVFTSEG…EGEELTVSYI (247 aa). 17 to 19 is a binding site for S-adenosyl-L-methionine; sequence KGR. Zn(2+)-binding residues include C52, C55, C65, C68, C74, C78, H86, and C90. The MYND-type zinc-finger motif lies at 52 to 90; sequence CHTCFKRQEKLHRCGQCKFAHYCDRTCQKDAWLNHKNEC. Residues H135 and 205–206 contribute to the S-adenosyl-L-methionine site; that span reads NH. C208 is a binding site for Zn(2+). 270–272 is a binding site for S-adenosyl-L-methionine; that stretch reads YYF. Zn(2+)-binding residues include C274, C276, and C279.

The protein belongs to the class V-like SAM-binding methyltransferase superfamily. As to quaternary structure, interacts with HDAC1, HDAC2 and HDAC3. Interacts (via MYND-type zinc finger) with NACA isoform skNAC. Expressed in cardiac and skeletal muscle, lymphocytes and thymus.

The protein resides in the cytoplasm. The protein localises to the nucleus. It catalyses the reaction L-lysyl(4)-[histone H3] + 3 S-adenosyl-L-methionine = N(6),N(6),N(6)-trimethyl-L-lysyl(4)-[histone H3] + 3 S-adenosyl-L-homocysteine + 3 H(+). Methylates histone H3 at 'Lys-4' (H3K4me). Acts as a transcriptional repressor. Essential for cardiomyocyte differentiation and cardiac morphogenesis. This is Histone-lysine N-methyltransferase Smyd1 (Smyd1) from Mus musculus (Mouse).